The sequence spans 435 residues: Protein translocase subunit SecY (435 aa).

Helical transmembrane passes span 19–39 (ILFT…TVPG), 68–88 (FSVF…VQLL), 116–136 (YIAL…FDTL), 147–167 (VQTY…VTWL), 179–199 (GVSM…IKGI), 216–236 (FIFV…TTFV), 269–289 (VIPV…FQVV), 311–331 (ISGM…YTFV), 372–392 (VGSL…DVFG), and 395–415 (DAVA…IEGM).

Belongs to the SecY/SEC61-alpha family. As to quaternary structure, component of the Sec protein translocase complex. Heterotrimer consisting of SecY, SecE and SecG subunits. The heterotrimers can form oligomers, although 1 heterotrimer is thought to be able to translocate proteins. Interacts with the ribosome. Interacts with SecDF, and other proteins may be involved. Interacts with SecA.

The protein resides in the cell membrane. Its function is as follows. The central subunit of the protein translocation channel SecYEG. Consists of two halves formed by TMs 1-5 and 6-10. These two domains form a lateral gate at the front which open onto the bilayer between TMs 2 and 7, and are clamped together by SecE at the back. The channel is closed by both a pore ring composed of hydrophobic SecY resides and a short helix (helix 2A) on the extracellular side of the membrane which forms a plug. The plug probably moves laterally to allow the channel to open. The ring and the pore may move independently. In Streptococcus sanguinis (strain SK36), this protein is Protein translocase subunit SecY.